The chain runs to 185 residues: MDLLSCTVNDAEIFSLVKKEVLSLNTNDYTTAISLSNRLKINKKKINQQLYKLQKEDTVKMVPSNPPKWFKNYNCDNGEKHDSKLEQKNHIPNHIFSDTVPYKKIINWKDKNPCIVLNEYCQFTCRDWSIDITTSGKSHCPMFTATVIISGIKFKPAIGNTKREAKYNASKITMDEILDSVIIKF.

Residues Thr-7–Tyr-73 enclose the Z-binding domain. The DRBM domain maps to Asn-112 to Asp-179.

This sequence belongs to the poxviridae E3 protein family.

Functionally, RNA-binding protein that plays a role in the inhibition of multiple cellular antiviral responses activated by double-stranded RNA (dsRNA), such as inhibition of PKR activation, necroptosis, and IFN-mediated antiviral activities. Recognizes and binds Z-RNA structures via its Z-binding domain and dsRNA via its DRBM domain: RNA-binding activity is required to escape host ZBP1-dependent necroptosis. Mechanistically, the Z-binding domain binds Z-RNAs that are produced during Yaba-like disease virus infection, thereby competing with Z-RNA detection by host ZBP1, suppressing ZBP1-dependent necroptosis. This Yaba-like disease virus (YLDV) protein is Protein E3 homolog.